A 240-amino-acid polypeptide reads, in one-letter code: UDP-2,3-diacylglucosamine hydrolase (240 aa).

Asp-8, His-10, Asp-41, Asn-79, and His-114 together coordinate Mn(2+). 79-80 (NR) serves as a coordination point for substrate. Substrate contacts are provided by Asp-122, Ser-160, Asn-164, Lys-167, and His-195. 2 residues coordinate Mn(2+): His-195 and His-197.

Belongs to the LpxH family. Requires Mn(2+) as cofactor.

The protein localises to the cell inner membrane. It catalyses the reaction UDP-2-N,3-O-bis[(3R)-3-hydroxytetradecanoyl]-alpha-D-glucosamine + H2O = 2-N,3-O-bis[(3R)-3-hydroxytetradecanoyl]-alpha-D-glucosaminyl 1-phosphate + UMP + 2 H(+). It functions in the pathway glycolipid biosynthesis; lipid IV(A) biosynthesis; lipid IV(A) from (3R)-3-hydroxytetradecanoyl-[acyl-carrier-protein] and UDP-N-acetyl-alpha-D-glucosamine: step 4/6. Its function is as follows. Hydrolyzes the pyrophosphate bond of UDP-2,3-diacylglucosamine to yield 2,3-diacylglucosamine 1-phosphate (lipid X) and UMP by catalyzing the attack of water at the alpha-P atom. Involved in the biosynthesis of lipid A, a phosphorylated glycolipid that anchors the lipopolysaccharide to the outer membrane of the cell. The polypeptide is UDP-2,3-diacylglucosamine hydrolase (Escherichia coli (strain UTI89 / UPEC)).